Consider the following 531-residue polypeptide: 2-isopropylmalate synthase (531 aa).

Residues 8-284 form the Pyruvate carboxyltransferase domain; it reads IIIFDTTLRD…LTNIDTKQIY (277 aa). Mn(2+) is bound by residues aspartate 17, histidine 208, histidine 210, and asparagine 244. Positions 408–531 are regulatory domain; the sequence is RVELVQVSCG…TQDKQTEVTA (124 aa).

The protein belongs to the alpha-IPM synthase/homocitrate synthase family. LeuA type 1 subfamily. Homodimer. Mn(2+) is required as a cofactor.

It localises to the cytoplasm. The enzyme catalyses 3-methyl-2-oxobutanoate + acetyl-CoA + H2O = (2S)-2-isopropylmalate + CoA + H(+). Its pathway is amino-acid biosynthesis; L-leucine biosynthesis; L-leucine from 3-methyl-2-oxobutanoate: step 1/4. Catalyzes the condensation of the acetyl group of acetyl-CoA with 3-methyl-2-oxobutanoate (2-ketoisovalerate) to form 3-carboxy-3-hydroxy-4-methylpentanoate (2-isopropylmalate). This Trichormus variabilis (strain ATCC 29413 / PCC 7937) (Anabaena variabilis) protein is 2-isopropylmalate synthase.